Reading from the N-terminus, the 543-residue chain is Acrosin-binding protein (543 aa).

An N-terminal signal peptide occupies residues 1–25 (MGQPAAGSILTLLRVLLLPLGPALA). The interval 26-106 (QDSPSAPTPG…ASWFESFCQF (81 aa)) is pro-ACR binding. Positions 26–276 (QDSPSAPTPG…DPHSFTARVR (251 aa)) are cleaved as a propeptide — removed in mature form. Residues 187 to 239 (AGQEQAAGHKQEQGQEQHKQDPTQEHKQDDGQEQEEQEEEQEEEGKQEEGQSV) form a disordered region. Over residues 193-216 (AGHKQEQGQEQHKQDPTQEHKQDD) the composition is skewed to basic and acidic residues. The segment covering 217 to 232 (GQEQEEQEEEQEEEGK) has biased composition (acidic residues). Residues 319–427 (LPHKEALLVL…TQAGTSESGR (109 aa)) are pro-ACR binding.

Binds proacrosin (ACR). Does not bind the mature form of ACR. In terms of processing, the N-terminus is blocked. Phosphorylated on Tyr residues in capacitated sperm. Post-translationally, synthesized as a 60-kDa precursor, the 32-kDa mature form is post-translationally produced by the removal of the N-terminal half of the precursor during sperm maturation in the testis and/or epididymis. In terms of tissue distribution, specifically expressed in testis.

It localises to the secreted. The protein resides in the cytoplasmic vesicle. The protein localises to the secretory vesicle. Its subcellular location is the acrosome. In terms of biological role, acrosomal protein that maintains proacrosin (pro-ACR) as an enzymatically inactive zymogen in the acrosome. Involved also in the acrosome formation. This is Acrosin-binding protein (ACRBP) from Cavia porcellus (Guinea pig).